The primary structure comprises 667 residues: Alpha-1,4-glucan:maltose-1-phosphate maltosyltransferase (667 aa).

3 residues coordinate alpha-maltose 1-phosphate: Lys-261, Gln-321, and Asp-356. The active-site Nucleophile is Asp-392. Asn-393 provides a ligand contact to alpha-maltose 1-phosphate. The active-site Proton donor is Glu-421. 534 to 535 (KY) is a binding site for alpha-maltose 1-phosphate.

Belongs to the glycosyl hydrolase 13 family. GlgE subfamily. Homodimer.

It catalyses the reaction alpha-maltose 1-phosphate + [(1-&gt;4)-alpha-D-glucosyl](n) = [(1-&gt;4)-alpha-D-glucosyl](n+2) + phosphate. In terms of biological role, maltosyltransferase that uses maltose 1-phosphate (M1P) as the sugar donor to elongate linear or branched alpha-(1-&gt;4)-glucans. Is involved in a branched alpha-glucan biosynthetic pathway from trehalose, together with TreS, Mak and GlgB. The polypeptide is Alpha-1,4-glucan:maltose-1-phosphate maltosyltransferase (Methylacidiphilum infernorum (isolate V4) (Methylokorus infernorum (strain V4))).